The chain runs to 922 residues: MDYKDTLLMPKTDFPMRGNLPNREPEIQGKWEDMDIYSLVQKRTEGRPMFVLHDGPPYANGDIHMGHALNKVLKDFIVRSRSMSGYHAPYVPGWDTHGLPIETALTKNKKVKRKEMTVAEFRKLCEEYAWQQIEGQKAQFKRLGVRGDWENPYVTLKPEFEAQQIKVFGEMAKKGYIYKGKKPVYWSPSSESALAEAEIEYHDKRSPSIYVAFDVKDGKGVLTNGEKIVIWTTTPWTIPANLGIAVHPELEYSVVAAGGARYVMASALIESVAKAIGFEDHEVVQTVKGKDLEHIVAVHPLYGRDSLVMLGEHVTTDAGTGCVHTAPGHGEDDFIIGQKYGLDVLCPVDEKGHMTSEAPGFEGLFYDQANKPITEQLEEKGALLKLDFITHSYPHDWRTKKPTIFRATAQWFASIKDFRDELLEAVKKTKWVPEWGETRLYNMIRDRGDWCISRQRAWGVPIPVFYAENGEPIITDETINHVSELFREHGSNIWFEKEANELLPEGFTHPGSPNGKFTKEQDIMDVWFDSGSSHQAVLEEREDLVRPADLYLEGSDQYRGWFNSSISTAVAVTGKAPYKGVLSHGFALDGEGRKMSKSLGNVVVPAKIMNQFGADILRLWVASVDYQADVRVSDAILKQVAEVYRKIRNTFRFLHGNIADFDPAKDAIAVEDLREVDQYILIKLNSLIEKVKKAYEEYDFAVIYHAVHNFCAIELSSFYMDFAKDVVYIEHADHKDRRSMQTVFYETLLALVKLIAPILPHTADEMWSHFTFVSEKSVQLTDMPETRDIPNAKETEEKFDSFMKLRDDVLKALETARNEKIIGKSSVASLTLYPNEEAKALLSSIKEDVKQLFIVSELAIGGTEADAPEDAQSFETGKIVVAQAEGETCERCRMVSKEIGEDPDHPELCPRCAGIVKTYYQN.

Positions 57 to 67 (PYANGDIHMGH) match the 'HIGH' region motif. Glutamate 553 is a binding site for L-isoleucyl-5'-AMP. The 'KMSKS' region motif lies at 594 to 598 (KMSKS). Residue lysine 597 coordinates ATP. The Zn(2+) site is built by cysteine 889, cysteine 892, cysteine 909, and cysteine 912.

It belongs to the class-I aminoacyl-tRNA synthetase family. IleS type 1 subfamily. As to quaternary structure, monomer. Requires Zn(2+) as cofactor.

The protein localises to the cytoplasm. It carries out the reaction tRNA(Ile) + L-isoleucine + ATP = L-isoleucyl-tRNA(Ile) + AMP + diphosphate. Catalyzes the attachment of isoleucine to tRNA(Ile). As IleRS can inadvertently accommodate and process structurally similar amino acids such as valine, to avoid such errors it has two additional distinct tRNA(Ile)-dependent editing activities. One activity is designated as 'pretransfer' editing and involves the hydrolysis of activated Val-AMP. The other activity is designated 'posttransfer' editing and involves deacylation of mischarged Val-tRNA(Ile). The chain is Isoleucine--tRNA ligase from Bacillus licheniformis (strain ATCC 14580 / DSM 13 / JCM 2505 / CCUG 7422 / NBRC 12200 / NCIMB 9375 / NCTC 10341 / NRRL NRS-1264 / Gibson 46).